Reading from the N-terminus, the 168-residue chain is Cell division inhibitor SulA (168 aa).

The interval 106–112 (ALLTGNY) is ftsZ binding. Positions 161–168 (KIHSSLYH) are lon protease binding.

Belongs to the SulA family. As to quaternary structure, interacts with FtsZ. Post-translationally, is rapidly cleaved and degraded by the Lon protease once DNA damage is repaired.

Functionally, component of the SOS system and an inhibitor of cell division. Accumulation of SulA causes rapid cessation of cell division and the appearance of long, non-septate filaments. In the presence of GTP, binds a polymerization-competent form of FtsZ in a 1:1 ratio, thus inhibiting FtsZ polymerization and therefore preventing it from participating in the assembly of the Z ring. This mechanism prevents the premature segregation of damaged DNA to daughter cells during cell division. In Serratia proteamaculans (strain 568), this protein is Cell division inhibitor SulA.